Reading from the N-terminus, the 789-residue chain is MKIAIALLACLGLAAAASFHQTHEVKIADKAFLMKQKFLFEIVYRVEDPLMFEDHIKQGEKFYFEESYYTHYDMYMKKFFEAYKAHALLPKGEFFGALVMSHAKQARGLFNFFYYAKDWETFAANVAWARMHVNEGMFVYALTMAVIHRNDFHGLMLPSIYEIFPQFFFNSKFVFEAEKFDYEMWMKMTMYEKEYMDVYYKTNGYDYSTMYRSSDYTYMKDFKTWQWWKLMGLGEHWYTEDKFILRENIYEFNQETKWLSMMKDVKKFYMPVDYTRDLNLYNKESKLSYFTEDLGWNAYWYYLNMDYSFFLDGNTFDLKNDRRGEWWLYNVHQLLSRYYMERLSHGFGEIPEFSWYQQIEMGYDPQLIYYNGIGYSFRKNYYEMETYANYDMLDKITGFLKRIHNIVEMGYYKTADGHTIDLRKPEAIEFIGNMLQGNVDAMDKMFYQFWYMLAHMYFADADYYQMDVYPNVMLNFETMMRDPMYYMFYKSIAQVYFQFMHYLPKYTKEQLLMPGVTMKNVEVSDLTTYFDLVDFDVTNMLNDKMIFQDGKFVWDMSLFARQMRLNHKPFTYTYTIESEKVEKVVIRAFLGPKFDEFGKVISLAENRMNFMEIDEFYYELKAGTNKITRKSSEFYWTVKDRTTYTELYYYTMMAFDGKYDFPLDISEPHCGFPDRLVLPMGWQKGMPMQMFFMVVPYVAPAHEQFSTFDYTYSCGIGSGARYVDSLPFGYPFDRAIDEYEFFVPNMYFKDVSIYHADTMEPYYKYKSYSNYGHFDYTFFNDYYTKYFKF.

Residues 1–16 form the signal peptide; sequence MKIAIALLACLGLAAA.

Belongs to the hemocyanin family. In terms of assembly, heterohexamer, composed of three subunits, alpha, beta and gamma. Larval hemolymph.

The protein localises to the secreted. It is found in the extracellular space. Its function is as follows. Larval storage protein (LSP) which may serve as a store of amino acids for synthesis of adult proteins. This is Larval serum protein 1 beta chain (Lsp1beta) from Drosophila melanogaster (Fruit fly).